Here is a 414-residue protein sequence, read N- to C-terminus: Tyrosine--tRNA ligase (414 aa).

The short motif at 57 to 66 is the 'HIGH' region element; it reads PSAPDVHIGH. Residues 241-245 carry the 'KMSKS' region motif; that stretch reads KMSKS. Lysine 244 is an ATP binding site. An S4 RNA-binding domain is found at 352–413; sequence VPLIDLLVTL…GKRKFAKLSL (62 aa).

The protein belongs to the class-I aminoacyl-tRNA synthetase family. TyrS type 2 subfamily. As to quaternary structure, homodimer.

Its subcellular location is the cytoplasm. It carries out the reaction tRNA(Tyr) + L-tyrosine + ATP = L-tyrosyl-tRNA(Tyr) + AMP + diphosphate + H(+). In terms of biological role, catalyzes the attachment of tyrosine to tRNA(Tyr) in a two-step reaction: tyrosine is first activated by ATP to form Tyr-AMP and then transferred to the acceptor end of tRNA(Tyr). This is Tyrosine--tRNA ligase from Shouchella clausii (strain KSM-K16) (Alkalihalobacillus clausii).